Here is a 495-residue protein sequence, read N- to C-terminus: Autoinducer 2 import ATP-binding protein LsrA (495 aa).

2 consecutive ABC transporter domains span residues 5–233 (IEAH…TPVS) and 256–494 (AQDF…FGGQ). 37 to 44 (GGNGAGKS) serves as a coordination point for ATP.

It belongs to the ABC transporter superfamily. AI-2 autoinducer porter (TC 3.A.1.2.8) family. The complex is composed of two ATP-binding proteins (LsrA), two transmembrane proteins (LsrC and LsrD) and a solute-binding protein (LsrB).

It localises to the cell inner membrane. The catalysed reaction is ATP + H2O + (2R,4S)-2-methyl-2,3,3,4-tetrahydroxytetrahydrofuran-[AI-2-binding protein]Side 1 = ADP + phosphate + (2R,4S)-2-methyl-2,3,3,4-tetrahydroxytetrahydrofuranSide 2 + [AI-2-binding protein]Side 1.. Part of the ABC transporter complex LsrABCD involved in autoinducer 2 (AI-2) import. Responsible for energy coupling to the transport system. In Enterobacter sp. (strain 638), this protein is Autoinducer 2 import ATP-binding protein LsrA (lsrA).